The chain runs to 259 residues: UPF0246 protein NMB0895 (259 aa).

This sequence belongs to the UPF0246 family.

This Neisseria meningitidis serogroup B (strain ATCC BAA-335 / MC58) protein is UPF0246 protein NMB0895.